The chain runs to 122 residues: Large ribosomal subunit protein uL14c (122 aa).

Belongs to the universal ribosomal protein uL14 family. As to quaternary structure, part of the 50S ribosomal subunit.

The protein resides in the plastid. It is found in the chloroplast. Its function is as follows. Binds to 23S rRNA. This chain is Large ribosomal subunit protein uL14c, found in Lactuca sativa (Garden lettuce).